The primary structure comprises 592 residues: Frizzled-9 (592 aa).

The signal sequence occupies residues 1–23 (MAVPPLLRGALLLWQLLATGGAA). The Extracellular portion of the chain corresponds to 24 to 230 (LEIGRFDPER…EVFWSRRDKD (207 aa)). Positions 35-156 (RGPAPCQAME…NDPHALCMEA (122 aa)) constitute an FZ domain. Disulfide bonds link Cys40-Cys101, Cys48-Cys94, Cys85-Cys123, Cys112-Cys153, and Cys116-Cys140. Asn54 carries an N-linked (GlcNAc...) asparagine glycan. The tract at residues 59–173 (PNLLGHTSQG…PTEPHKGLGM (115 aa)) is required for Wnt-activated receptor activity. N-linked (GlcNAc...) asparagine glycosylation is present at Asn159. Residues 231 to 251 (FALVWMAVWSALCFFSTAFTV) form a helical membrane-spanning segment. Residues 252 to 267 (FTFLLEPHRFQYPERP) are Cytoplasmic-facing. Residues 268-288 (IIFLSMCYNVYSLAFLIRAVA) form a helical membrane-spanning segment. Over 289 to 316 (GAQSVACDQEAGALYVIQEGLENTGCTL) the chain is Extracellular. A helical membrane pass occupies residues 317-337 (VFLLLYYFGMASSLWWVVLTL). The Cytoplasmic segment spans residues 338 to 356 (TWFLAAGKKWGHEAIEAHG). The chain crosses the membrane as a helical span at residues 357-377 (SYFHMAAWGLPALKTIVVLTL). Residues 378–401 (RKVAGDELTGLCYVASMDPAALTG) lie on the Extracellular side of the membrane. The helical transmembrane segment at 402–422 (FVLVPLSCYLVLGTSFLLTGF) threads the bilayer. At 423 to 448 (VALFHIRKIMKTGGTNTEKLEKLMVK) the chain is on the cytoplasmic side. A helical membrane pass occupies residues 449-469 (IGVFSILYTVPATCVIVCYVY). At 470-509 (ERLNMDFWRLRATEQPCTAATVPGGRRDCSLPGGSVPTVA) the chain is on the extracellular side. The helical transmembrane segment at 510–530 (VFMLKIFMSLVVGITSGVWVW) threads the bilayer. At 531-592 (SSKTFQTWQS…DPSLENPTHL (62 aa)) the chain is on the cytoplasmic side. The short motif at 533-538 (KTFQTW) is the Lys-Thr-X-X-X-Trp motif, mediates interaction with the PDZ domain of Dvl family members element. The tract at residues 555–592 (ACRTPGGYGRGTHCHYKAPTVVLHMTKTDPSLENPTHL) is required for CTNNB1 accumulation and TCF transcription factor activity.

It belongs to the G-protein coupled receptor Fz/Smo family. Ubiquitinated by ZNRF3, leading to its degradation by the proteasome. In the embryo, found in the neural tube, trunk skeletal muscle precursors (myotomes), limb skeletal anlagen, craniofacial regions and nephric ducts. In the adult, expression is abundant in heart, brain, testis and skeletal muscle. In the testis, expressed in all spermatogenic cell types. Lower levels in adult lung, liver and kidney. Barely detectable in spleen. Expressed also in chondrocytes.

It is found in the cell membrane. Its function is as follows. Receptor for WNT2 that is coupled to the beta-catenin canonical signaling pathway, which leads to the activation of disheveled proteins, inhibition of GSK-3 kinase, nuclear accumulation of beta-catenin and activation of Wnt target genes. Plays a role in neuromuscular junction (NMJ) assembly by negatively regulating the clustering of acetylcholine receptors (AChR) through the beta-catenin canonical signaling pathway. May play a role in neural progenitor cells (NPCs) viability through the beta-catenin canonical signaling pathway by negatively regulating cell cycle arrest leading to inhibition of neuron apoptotic process. During hippocampal development, regulates neuroblast proliferation and apoptotic cell death. Controls bone formation through non canonical Wnt signaling mediated via ISG15. Positively regulates bone regeneration through non canonical Wnt signaling. This Mus musculus (Mouse) protein is Frizzled-9 (Fzd9).